The chain runs to 114 residues: UPF0757 protein YmgG (114 aa).

The protein belongs to the UPF0757 family.

The protein is UPF0757 protein YmgG of Escherichia fergusonii (strain ATCC 35469 / DSM 13698 / CCUG 18766 / IAM 14443 / JCM 21226 / LMG 7866 / NBRC 102419 / NCTC 12128 / CDC 0568-73).